The following is a 143-amino-acid chain: Sirohydrochlorin cobaltochelatase (143 aa).

His-9 (proton acceptor) is an active-site residue. Residue His-9 participates in Co(2+) binding. Position 9 (His-9) interacts with Ni(2+). Substrate-binding positions include Glu-45 and 70–75 (LAHGNH). His-75 is a Co(2+) binding site. Residue His-75 coordinates Ni(2+).

Belongs to the CbiX family. CbiXS subfamily. In terms of assembly, homotetramer; dimer of dimers.

It catalyses the reaction Co-sirohydrochlorin + 2 H(+) = sirohydrochlorin + Co(2+). The enzyme catalyses Ni-sirohydrochlorin + 2 H(+) = sirohydrochlorin + Ni(2+). The protein operates within cofactor biosynthesis; adenosylcobalamin biosynthesis; cob(II)yrinate a,c-diamide from sirohydrochlorin (anaerobic route): step 1/10. Its function is as follows. Catalyzes the insertion of Co(2+) into sirohydrochlorin as part of the anaerobic pathway to cobalamin biosynthesis. Involved in the biosynthesis of the unique nickel-containing tetrapyrrole coenzyme F430, the prosthetic group of methyl-coenzyme M reductase (MCR), which plays a key role in methanogenesis and anaerobic methane oxidation. Catalyzes the insertion of Ni(2+) into sirohydrochlorin to yield Ni-sirohydrochlorin. The polypeptide is Sirohydrochlorin cobaltochelatase (Methanococcus aeolicus (strain ATCC BAA-1280 / DSM 17508 / OCM 812 / Nankai-3)).